Reading from the N-terminus, the 145-residue chain is D-aminoacyl-tRNA deacylase (145 aa).

Positions 137 to 138 (GP) match the Gly-cisPro motif, important for rejection of L-amino acids motif.

The protein belongs to the DTD family. Homodimer.

The protein resides in the cytoplasm. It catalyses the reaction glycyl-tRNA(Ala) + H2O = tRNA(Ala) + glycine + H(+). The enzyme catalyses a D-aminoacyl-tRNA + H2O = a tRNA + a D-alpha-amino acid + H(+). Its function is as follows. An aminoacyl-tRNA editing enzyme that deacylates mischarged D-aminoacyl-tRNAs. Also deacylates mischarged glycyl-tRNA(Ala), protecting cells against glycine mischarging by AlaRS. Acts via tRNA-based rather than protein-based catalysis; rejects L-amino acids rather than detecting D-amino acids in the active site. By recycling D-aminoacyl-tRNA to D-amino acids and free tRNA molecules, this enzyme counteracts the toxicity associated with the formation of D-aminoacyl-tRNA entities in vivo and helps enforce protein L-homochirality. The protein is D-aminoacyl-tRNA deacylase of Teredinibacter turnerae (strain ATCC 39867 / T7901).